The primary structure comprises 202 residues: Small ribosomal subunit protein uS4c (202 aa).

The S4 RNA-binding domain maps to 90–150; the sequence is MRLDNVIFRL…NQRKSQAIIN (61 aa).

It belongs to the universal ribosomal protein uS4 family. Part of the 30S ribosomal subunit. Contacts protein S5. The interaction surface between S4 and S5 is involved in control of translational fidelity.

The protein localises to the plastid. It is found in the chloroplast. Functionally, one of the primary rRNA binding proteins, it binds directly to 16S rRNA where it nucleates assembly of the body of the 30S subunit. With S5 and S12 plays an important role in translational accuracy. The polypeptide is Small ribosomal subunit protein uS4c (rps4) (Canalohypopterygium tamariscinum (Moss)).